The sequence spans 170 residues: Acireductone dioxygenase (170 aa).

Fe(2+)-binding residues include histidine 99, histidine 101, glutamate 105, and histidine 144. 4 residues coordinate Ni(2+): histidine 99, histidine 101, glutamate 105, and histidine 144.

It belongs to the acireductone dioxygenase (ARD) family. In terms of assembly, monomer. Requires Fe(2+) as cofactor. It depends on Ni(2+) as a cofactor.

The catalysed reaction is 1,2-dihydroxy-5-(methylsulfanyl)pent-1-en-3-one + O2 = 3-(methylsulfanyl)propanoate + CO + formate + 2 H(+). The enzyme catalyses 1,2-dihydroxy-5-(methylsulfanyl)pent-1-en-3-one + O2 = 4-methylsulfanyl-2-oxobutanoate + formate + 2 H(+). It functions in the pathway amino-acid biosynthesis; L-methionine biosynthesis via salvage pathway; L-methionine from S-methyl-5-thio-alpha-D-ribose 1-phosphate: step 5/6. Catalyzes 2 different reactions between oxygen and the acireductone 1,2-dihydroxy-3-keto-5-methylthiopentene (DHK-MTPene) depending upon the metal bound in the active site. Fe-containing acireductone dioxygenase (Fe-ARD) produces formate and 2-keto-4-methylthiobutyrate (KMTB), the alpha-ketoacid precursor of methionine in the methionine recycle pathway. Ni-containing acireductone dioxygenase (Ni-ARD) produces methylthiopropionate, carbon monoxide and formate, and does not lie on the methionine recycle pathway. The protein is Acireductone dioxygenase of Bacillus anthracis.